The chain runs to 391 residues: Sister chromatid cohesion protein DCC1 (391 aa).

It belongs to the DCC1 family. As to quaternary structure, component of the ctf18-RFC complex which consists of ctf18, ctf8, dscc1 and the RFC complex.

The protein resides in the nucleus. Functionally, loads pcna onto primed templates regulating velocity, spacing and restart activity of replication forks. May couple DNA replication to sister chromatid cohesion. The polypeptide is Sister chromatid cohesion protein DCC1 (dscc1) (Xenopus tropicalis (Western clawed frog)).